A 413-amino-acid chain; its full sequence is Azaphilone biosynthesis cluster protein M (413 aa).

Over residues 123–138 (STQPDQVQPNQPTPSF) the composition is skewed to polar residues. A disordered region spans residues 123-145 (STQPDQVQPNQPTPSFESAAGAS).

It participates in secondary metabolite biosynthesis. Functionally, part of the gene cluster that mediates the biosynthesis of azaterrilone A and other azaphilones, a class of fungal metabolites characterized by a highly oxygenated pyrano-quinone bicyclic core and exhibiting a broad range of bioactivities. The first step of the pathway begins with the non-reducing polyketide synthase tazA that assembles one acetyl-CoA starter unit, five malonyl-CoA units, and catalyzes a series of Claisen condensations, methylation, PT-mediated cyclization, and finally releases the first hexaketide precursor through the R-domain. The tazA product then undergoes reduction on its terminal ketone and the following pyran-ring formation by yet undetermined enzyme(s). Dehydration and enoyl reduction, possibly involving the trans-enoyl reductase tazE leads to the next intermediate. TazD is predicted as an acetyltransferase and might catalyze the acetylation steps leading to the synthesis of azaterrilone A. Azaterrilone A is not the final product of the taz pathway and both the highly reducing polyketide synthase tazB and the dual enzyme tazHJ catalyze late steps of the pathway, leading to the production of the 2 final stereoisomers that contain additional polyketide modification whose structures have still to be determined. This Aspergillus terreus (strain NIH 2624 / FGSC A1156) protein is Azaphilone biosynthesis cluster protein M.